The chain runs to 200 residues: Imidazoleglycerol-phosphate dehydratase (200 aa).

The protein belongs to the imidazoleglycerol-phosphate dehydratase family.

The protein resides in the cytoplasm. It carries out the reaction D-erythro-1-(imidazol-4-yl)glycerol 3-phosphate = 3-(imidazol-4-yl)-2-oxopropyl phosphate + H2O. The protein operates within amino-acid biosynthesis; L-histidine biosynthesis; L-histidine from 5-phospho-alpha-D-ribose 1-diphosphate: step 6/9. This Chlorobium limicola (strain DSM 245 / NBRC 103803 / 6330) protein is Imidazoleglycerol-phosphate dehydratase.